We begin with the raw amino-acid sequence, 81 residues long: Fungal defensin micasin (81 aa).

Positions 1 to 21 (MQFTKLATILLVSLMGSAAIA) are cleaved as a signal peptide. The propeptide occupies 22–43 (APATNNAAVDAAADATPAVEKR). 3 cysteine pairs are disulfide-bonded: C47–C68, C54–C76, and C58–C78.

It belongs to the invertebrate defensin family.

The protein localises to the secreted. In terms of biological role, antibacterial peptide with potent activity against both Gram-positive and Gram-negative bacteria. May kill bacteria via an intracellular action mode to affect protein folding. Does not show effects on tested filamentous fungi or on the yeast S.cerevisiae. Does not act by destroying the membrane integrity, which is consistent with its nonamphiphilic architecture. Acts more rapidly than vancomycin, suggesting it does not act by inhibiting cell-wall biosynthesis. Does not cause hemolysis and has no cytotoxic effect on HEK cells. In vivo, is as efficient as vancomycin to protect mouse peritonitis models from S.aureus and P.aeruginosa infections. This Arthroderma otae (Microsporum canis) protein is Fungal defensin micasin.